We begin with the raw amino-acid sequence, 142 residues long: Snaclec 2 (142 aa).

The N-terminal stretch at 1 to 23 (MGRFIFVSFSLLVVFLSLSGTGA) is a signal peptide. Cys25 and Cys36 are oxidised to a cystine. In terms of domain architecture, C-type lectin spans 32–139 (YEGHCYRVFQ…CSETHNVICK (108 aa)). An N-linked (GlcNAc...) asparagine glycan is attached at Asn43. Disulfide bonds link Cys53/Cys138 and Cys115/Cys130.

Belongs to the snaclec family. As to quaternary structure, heterodimer; disulfide-linked. In terms of tissue distribution, expressed by the venom gland.

The protein resides in the secreted. In terms of biological role, interferes with one step of hemostasis (modulation of platelet aggregation, or coagulation cascade, for example). This is Snaclec 2 from Sistrurus catenatus edwardsii (Desert massasauga).